The chain runs to 559 residues: ADP,ATP carrier protein 1 (559 aa).

A compositionally biased stretch (polar residues) spans M1–S10. Positions M1–I22 are disordered. N-linked (GlcNAc...) asparagine glycosylation occurs at N8. Transmembrane regions (helical) follow at residues F46 to L66, T79 to I99, I111 to L131, and I174 to F194. N-linked (GlcNAc...) asparagine glycosylation is present at N196. Helical transmembrane passes span P210–F230 and Q242–L262. N290 carries an N-linked (GlcNAc...) asparagine glycan. Helical transmembrane passes span L305 to S325, Q354 to V373, and G377 to L397. Residue N403 is glycosylated (N-linked (GlcNAc...) asparagine). A run of 3 helical transmembrane segments spans residues Y425 to F447, I473 to L493, and P503 to L523.

This sequence belongs to the ADP/ATP translocase tlc family.

The protein localises to the cell membrane. Functionally, ATP transporter involved in the uptake of ATP from the host cell cytoplasm. Provides the microsporidian cell with host ATP in exchange for ADP. This is an obligate exchange system. This energy acquiring activity is an important component of microsporidian parasitism. The sequence is that of ADP,ATP carrier protein 1 (NTT1) from Encephalitozoon cuniculi (strain GB-M1) (Microsporidian parasite).